We begin with the raw amino-acid sequence, 224 residues long: Endoplasmic reticulum vesicle protein 25 (224 aa).

An N-terminal signal peptide occupies residues 1 to 25 (MIPPRSLGSTAALLLVLLFTTLASA). Topologically, residues 26 to 190 (IKFDLPSNAH…ADTNLSTNMR (165 aa)) are lumenal. The 94-residue stretch at 38 to 131 (TKCIWNYALS…IPVVTIDLDV (94 aa)) folds into the GOLD domain. A helical transmembrane segment spans residues 191 to 211 (VTNFAILTLIALIALGVWQVF). Over 212 to 224 (HLRGFFKRKYLID) the chain is Cytoplasmic.

The protein belongs to the EMP24/GP25L family.

Its subcellular location is the endoplasmic reticulum membrane. The protein localises to the golgi apparatus membrane. Its function is as follows. Constituent of COPII-coated endoplasmic reticulum-derived transport vesicles. Required for efficient transport of a subset of secretory proteins to the Golgi. Facilitates retrograde transport from the Golgi to the endoplasmic reticulum. This Mycosarcoma maydis (Corn smut fungus) protein is Endoplasmic reticulum vesicle protein 25 (ERV25).